Consider the following 467-residue polypeptide: ESX-4 secretion system protein eccD4 (467 aa).

11 helical membrane-spanning segments follow: residues 122 to 142 (GALA…RNAL), 152 to 172 (ATAG…VIAC), 186 to 206 (VIAT…VPGV), 209 to 229 (VLVA…ITGC), 241 to 261 (AVVV…VPAI), 264 to 284 (LATL…VLLA), 319 to 339 (LTSL…GTAV), 344 to 364 (IHRS…LLLL), 374 to 394 (SLVF…VAAD), 401 to 421 (PWIA…GFVA), and 439 to 459 (CLAL…YSAV).

It belongs to the EccD/Snm4 family. As to quaternary structure, part of the ESX-4 / type VII secretion system (T7SS), which is composed of cytosolic and membrane components.

It localises to the cell membrane. The sequence is that of ESX-4 secretion system protein eccD4 (eccD4) from Mycobacterium tuberculosis (strain CDC 1551 / Oshkosh).